Here is a 364-residue protein sequence, read N- to C-terminus: Dihydroorotate dehydrogenase (quinone) (364 aa).

FMN is bound by residues alanine 61–lysine 65 and threonine 85. Substrate is bound at residue lysine 65. Asparagine 110–phenylalanine 114 serves as a coordination point for substrate. 2 residues coordinate FMN: asparagine 139 and asparagine 170. Asparagine 170 is a substrate binding site. The active-site Nucleophile is the serine 173. Residue asparagine 175 participates in substrate binding. 2 residues coordinate FMN: lysine 215 and serine 243. Substrate is bound at residue asparagine 244 to threonine 245. FMN-binding positions include glycine 266, glycine 295, and tyrosine 316–threonine 317.

The protein belongs to the dihydroorotate dehydrogenase family. Type 2 subfamily. As to quaternary structure, monomer. FMN serves as cofactor.

The protein localises to the cell membrane. It catalyses the reaction (S)-dihydroorotate + a quinone = orotate + a quinol. Its pathway is pyrimidine metabolism; UMP biosynthesis via de novo pathway; orotate from (S)-dihydroorotate (quinone route): step 1/1. Catalyzes the conversion of dihydroorotate to orotate with quinone as electron acceptor. The chain is Dihydroorotate dehydrogenase (quinone) from Brucella anthropi (strain ATCC 49188 / DSM 6882 / CCUG 24695 / JCM 21032 / LMG 3331 / NBRC 15819 / NCTC 12168 / Alc 37) (Ochrobactrum anthropi).